The primary structure comprises 77 residues: Probable Fe(2+)-trafficking protein (77 aa).

This sequence belongs to the Fe(2+)-trafficking protein family.

In terms of biological role, could be a mediator in iron transactions between iron acquisition and iron-requiring processes, such as synthesis and/or repair of Fe-S clusters in biosynthetic enzymes. The chain is Probable Fe(2+)-trafficking protein from Baumannia cicadellinicola subsp. Homalodisca coagulata.